The sequence spans 339 residues: Spore coat polysaccharide biosynthesis protein SpsG (339 aa).

Residues 241–261 traverse the membrane as a helical segment; the sequence is IVAGGISLYEAICIGVPCLVL.

The protein to M.jannaschii MJ1062.

The protein resides in the cell membrane. It participates in spore coat biogenesis; spore coat polysaccharide biosynthesis. The sequence is that of Spore coat polysaccharide biosynthesis protein SpsG (spsG) from Bacillus subtilis (strain 168).